Reading from the N-terminus, the 334-residue chain is N-acetyl-gamma-glutamyl-phosphate reductase (334 aa).

Cys-154 is an active-site residue.

Belongs to the NAGSA dehydrogenase family. Type 1 subfamily.

Its subcellular location is the cytoplasm. The enzyme catalyses N-acetyl-L-glutamate 5-semialdehyde + phosphate + NADP(+) = N-acetyl-L-glutamyl 5-phosphate + NADPH + H(+). Its pathway is amino-acid biosynthesis; L-arginine biosynthesis; N(2)-acetyl-L-ornithine from L-glutamate: step 3/4. Its function is as follows. Catalyzes the NADPH-dependent reduction of N-acetyl-5-glutamyl phosphate to yield N-acetyl-L-glutamate 5-semialdehyde. The sequence is that of N-acetyl-gamma-glutamyl-phosphate reductase from Vibrio parahaemolyticus serotype O3:K6 (strain RIMD 2210633).